Reading from the N-terminus, the 289-residue chain is Bifunctional protein FolD (289 aa).

NADP(+)-binding positions include 166 to 168 (GRS), S191, and I232.

The protein belongs to the tetrahydrofolate dehydrogenase/cyclohydrolase family. As to quaternary structure, homodimer.

It carries out the reaction (6R)-5,10-methylene-5,6,7,8-tetrahydrofolate + NADP(+) = (6R)-5,10-methenyltetrahydrofolate + NADPH. The catalysed reaction is (6R)-5,10-methenyltetrahydrofolate + H2O = (6R)-10-formyltetrahydrofolate + H(+). Its pathway is one-carbon metabolism; tetrahydrofolate interconversion. Catalyzes the oxidation of 5,10-methylenetetrahydrofolate to 5,10-methenyltetrahydrofolate and then the hydrolysis of 5,10-methenyltetrahydrofolate to 10-formyltetrahydrofolate. In Synechococcus sp. (strain JA-3-3Ab) (Cyanobacteria bacterium Yellowstone A-Prime), this protein is Bifunctional protein FolD.